The primary structure comprises 323 residues: Aquaporin-4 (323 aa).

Topologically, residues 1–36 (MSDGAAARRWGKCGPPCSRESIMVAFKGVWTQAFWK) are cytoplasmic. S-palmitoyl cysteine attachment occurs at residues Cys13 and Cys17. Residues 37–57 (AVTAEFLAMLIFVLLSVGSTI) form a helical membrane-spanning segment. Topologically, residues 58–69 (NWGGSENPLPVD) are extracellular. The chain crosses the membrane as a helical span at residues 70–89 (MVLISLCFGLSIATMVQCFG). Residues 90–93 (HISG) lie on the Cytoplasmic side of the membrane. An intramembrane region (discontinuously helical) is located at residues 94–101 (GHINPAVT). The short motif at 97-99 (NPA) is the NPA 1 element. Topologically, residues 102–115 (VAMVCTRKISIAKS) are cytoplasmic. Ser111 is subject to Phosphoserine; by PKG. Residues 116–136 (VFYITAQCLGAIIGAGILYLV) traverse the membrane as a helical segment. The Extracellular portion of the chain corresponds to 137 to 155 (TPPSVVGGLGVTTVHGNLT). The N-linked (GlcNAc...) asparagine glycan is linked to Asn153. Residues 156 to 176 (AGHGLLVELIITFQLVFTIFA) form a helical membrane-spanning segment. Residues 177-184 (SCDSKRTD) lie on the Cytoplasmic side of the membrane. Ser180 is subject to Phosphoserine; by PKC. Residues 185–205 (VTGSVALAIGFSVAIGHLFAI) form a helical membrane-spanning segment. The Extracellular segment spans residues 206–208 (NYT). The discontinuously helical intramembrane region spans 209-222 (GASMNPARSFGPAV). Residues 213–215 (NPA) carry the NPA 2 motif. The Extracellular segment spans residues 223–231 (IMGNWENHW). The chain crosses the membrane as a helical span at residues 232–252 (IYWVGPIIGAVLAGALYEYVF). Over 253 to 323 (CPDVELKRRL…DSSGEVLSSV (71 aa)) the chain is Cytoplasmic. Phosphoserine occurs at positions 276 and 285. Residue Thr289 is modified to Phosphothreonine. Phosphoserine is present on Ser321.

The protein belongs to the MIP/aquaporin (TC 1.A.8) family. As to quaternary structure, homotetramer. The tetramers can form oligomeric arrays in membranes. The size of the oligomers differs between tissues and is smaller in skeletal muscle than in brain. Interaction between AQP4 oligomeric arrays in close-by cells can contribute to cell-cell adhesion. Part of a complex containing MLC1, TRPV4, HEPACAM and ATP1B1. In terms of processing, phosphorylation by PKC at Ser-180 promotes internalization from the cell membrane, reducing the conductance by 50%. Phosphorylation by PKG at Ser-111 in response to glutamate increases conductance by 40%. Post-translationally, isoform Long: Palmitoylated on its N-terminal region. Isoform 3: Not palmitoylated. In terms of tissue distribution, detected in cerebellum. Detected on pericapillary astrocyte endfeet in cerebellum, and in skeletal muscle. Detected in glial lamellae in the hypothalamus (at protein level). Abundant in mature brain cortex, cerebellum and spinal cord. Highly expressed in the ependymal cell lining the aqueductal system and over the space of the brain in contact with the subarachnoid space. Detected in paraventricular and supraoptic nuclei, the granule cell layer of the dentate gyrus and the Purkinje cell layer in the cerebellum. Only weakly detectable in eye, kidney, intestine, and lung.

The protein localises to the cell membrane. Its subcellular location is the basolateral cell membrane. It is found in the endosome membrane. The protein resides in the sarcolemma. It localises to the cell projection. The enzyme catalyses H2O(in) = H2O(out). Functionally, forms a water-specific channel. Plays an important role in brain water homeostasis and in glymphatic solute transport. Required for a normal rate of water exchange across the blood brain interface. Required for normal levels of cerebrospinal fluid influx into the brain cortex and parenchyma along paravascular spaces that surround penetrating arteries, and for normal drainage of interstitial fluid along paravenous drainage pathways. Thereby, it is required for normal clearance of solutes from the brain interstitial fluid, including soluble beta-amyloid peptides derived from APP. Plays a redundant role in urinary water homeostasis and urinary concentrating ability. The chain is Aquaporin-4 (Aqp4) from Rattus norvegicus (Rat).